We begin with the raw amino-acid sequence, 992 residues long: Meckelin (992 aa).

Positions 1–35 are cleaved as a signal peptide; that stretch reads MVMRTRPLAAMAVRSCFSALTGTVYLLLVLCEVSW. Topologically, residues 36 to 516 are extracellular; that stretch reads AQIFSFPFQR…SVKYEMNQGD (481 aa). Residues 37-280 form a cysteine-rich region; it reads QIFSFPFQRP…FHYVFEGAAG (244 aa). Cystine bridges form between Cys49–Cys62, Cys65–Cys78, Cys80–Cys97, Cys100–Cys114, Cys117–Cys127, Cys129–Cys150, Cys153–Cys170, Cys173–Cys184, Cys186–Cys197, Cys237–Cys246, Cys253–Cys268, and Cys354–Cys375. A glycan (N-linked (GlcNAc...) asparagine) is linked at Asn242. Residues 517-545 form a helical membrane-spanning segment; that stretch reads AFVQTDIALGVLGGLAVLSSLLKTAGWKR. At 546–555 the chain is on the cytoplasmic side; the sequence is RIGSPMIDLQ. Residues 556-587 form a helical membrane-spanning segment; that stretch reads TVMKFLLYYAGDLANVFFIITVGTGLYWLIFF. Residues 588 to 600 are Extracellular-facing; the sequence is KAQKSVSVLLPMP. The helical transmembrane segment at 601-628 threads the bilayer; the sequence is VQEERFVTYVGCAFAMKALQFLHKLISQ. The Cytoplasmic segment spans residues 629–667; it reads ITIDIFFIDWERPKGKVLKAVEGEGGVRSATVPVSIWRT. An intramembrane region (helical) is located at residues 668-676; that stretch reads YFVANEWNE. Residues 668 to 698 traverse the membrane as a discontinuously helical segment; the sequence is YFVANEWNEIQTVRKINPLFQVLTTLFFLEV. An intramembrane segment occupies 677–685; sequence IQTVRKINP. The helical intramembrane region spans 686-698; that stretch reads LFQVLTTLFFLEV. Residues 699 to 728 are Extracellular-facing; it reads VGFKNLALMDPSSSLSRSLSDYAAPYSRIL. Positions 729 to 754 form an intramembrane region, helical; that stretch reads RYAVATTIWLVIGIVQVVFFAAFYER. A discontinuously helical transmembrane segment spans residues 729 to 768; it reads RYAVATTIWLVIGIVQVVFFAAFYERFIEDKIRQFVDLCS. Residues 755 to 759 lie within the membrane without spanning it; it reads FIEDK. Residues 760–768 constitute an intramembrane region (helical); the sequence is IRQFVDLCS. The Cytoplasmic segment spans residues 769–923; the sequence is MSNVSVFLLS…SIFYNDESHS (155 aa). The helical intramembrane region spans 924–926; sequence FSS. Residues 924–949 traverse the membrane as a discontinuously helical segment; sequence FSSVLYYGNEATLLIFDLLFFCVVDL. Residues 927-933 lie within the membrane without spanning it; sequence VLYYGNE. Positions 934–949 form an intramembrane region, helical; sequence ATLLIFDLLFFCVVDL. The Extracellular segment spans residues 950–954; that stretch reads ACQNF. A helical transmembrane segment spans residues 955–982; sequence VLASFLTYLQQEIFRFIRNTVGQKNLAT. Residues 983–992 lie on the Cytoplasmic side of the membrane; that stretch reads KTLVDERFLI.

As to quaternary structure, homodimer. Part of the tectonic-like complex (also named B9 complex). Interacts with DNAJB9, DNAJC10 and mutated SFTPC. Interacts with SYNE2 during the early establishment of cell polarity. Interacts (via C-terminus) with FLNA. Interacts with TMEM218. Interacts with WNT5A. Interacts with ROR2.

The protein resides in the cell membrane. Its subcellular location is the endoplasmic reticulum membrane. It localises to the cytoplasm. It is found in the cytoskeleton. The protein localises to the cilium basal body. Part of the tectonic-like complex which is required for tissue-specific ciliogenesis and may regulate ciliary membrane composition. Involved in centrosome migration to the apical cell surface during early ciliogenesis. Required for ciliary structure and function, including a role in regulating length and appropriate number through modulating centrosome duplication. Is a key regulator of stereociliary bundle orientation. Required for epithelial cell branching morphology. Essential for endoplasmic reticulum-associated degradation (ERAD) of surfactant protein C (sftpc). Involved in the negative regulation of canonical Wnt signaling, and activation of the non-canonical cascade stimulated by WNT5A. In non-canonical Wnt signaling, it may act as ROR2 coreceptor. This chain is Meckelin (Tmem67), found in Rattus norvegicus (Rat).